Consider the following 422-residue polypeptide: Acylglycerol kinase, mitochondrial (422 aa).

Residue Lys-6 is modified to N6-acetyllysine. A hydrophobic region spans residues 15-31 (TTAGLCLLTWGGHWLYG). Positions 58 to 199 (AQVKKATVFL…LDVLQIKGEK (142 aa)) constitute a DAGKc domain. A disordered region spans residues 249–271 (QASISYTGPTERPPNEPEETPVQ).

The protein belongs to the AGK family. As to quaternary structure, component of the TIM22 complex, which core is composed of TIMM22, associated with TIMM10 (TIMM10A and/or TIMM10B), TIMM9, AGK and TIMM29. Interacts with SMIM26. It depends on Mg(2+) as a cofactor. As to expression, highly expressed in muscle, heart, kidney and brain.

The protein localises to the mitochondrion inner membrane. The protein resides in the mitochondrion intermembrane space. It carries out the reaction a monoacylglycerol + ATP = a monoacyl-sn-glycero-3-phosphate + ADP + H(+). The catalysed reaction is a 1,2-diacyl-sn-glycerol + ATP = a 1,2-diacyl-sn-glycero-3-phosphate + ADP + H(+). The enzyme catalyses an N-acylsphing-4-enine + ATP = an N-acylsphing-4-enine 1-phosphate + ADP + H(+). It catalyses the reaction 1-(9Z-octadecenoyl)-sn-glycerol + ATP = 1-(9Z-octadecenoyl)-sn-glycero-3-phosphate + ADP + H(+). It carries out the reaction 1,2-di-(9Z-octadecenoyl)-sn-glycerol + ATP = 1,2-di-(9Z-octadecenoyl)-sn-glycero-3-phosphate + ADP + H(+). The catalysed reaction is a 1-acyl-sn-glycerol + ATP = a 1-acyl-sn-glycero-3-phosphate + ADP + H(+). The enzyme catalyses 1-hexadecanoyl-sn-glycerol + ATP = 1-hexadecanoyl-sn-glycero-3-phosphate + ADP + H(+). It catalyses the reaction a 2-acylglycerol + ATP = a 2-acyl-sn-glycerol 3-phosphate + ADP + H(+). It carries out the reaction 2-(5Z,8Z,11Z,14Z-eicosatetraenoyl)-glycerol + ATP = 2-(5Z,8Z,11Z,14Z-eicosatetraenoyl)-sn-glycero-3-phosphate + ADP + H(+). The catalysed reaction is 1-(5Z,8Z,11Z,14Z-eicosatetraenoyl)-sn-glycerol + ATP = 1-(5Z,8Z,11Z,14Z-eicosatetraenoyl)-sn-glycero-3-phosphate + ADP + H(+). The enzyme catalyses N-(hexanoyl)sphing-4-enine + ATP = N-hexanoylsphing-4-enine 1-phosphate + ADP + H(+). The protein operates within lipid metabolism; glycerolipid metabolism. In terms of biological role, lipid kinase that can phosphorylate both monoacylglycerol and diacylglycerol to form lysophosphatidic acid (LPA) and phosphatidic acid (PA), respectively. Does not phosphorylate sphingosine. Phosphorylates ceramide. Phosphorylates 1,2-dioleoylglycerol more rapidly than 2,3-dioleoylglycerol. Independently of its lipid kinase activity, acts as a component of the TIM22 complex. The TIM22 complex mediates the import and insertion of multi-pass transmembrane proteins into the mitochondrial inner membrane by forming a twin-pore translocase that uses the membrane potential as the external driving force. In the TIM22 complex, required for the import of a subset of metabolite carriers into mitochondria, such as ANT1/SLC25A4 and SLC25A24, while it is not required for the import of TIMM23. Overexpression increases the formation and secretion of LPA, resulting in transactivation of EGFR and activation of the downstream MAPK signaling pathway, leading to increased cell growth. In Homo sapiens (Human), this protein is Acylglycerol kinase, mitochondrial.